Reading from the N-terminus, the 669-residue chain is Thrombospondin-type laminin G domain and EAR repeat-containing protein (669 aa).

The signal sequence occupies residues 1 to 19 (MSALLSLCFVLPLAAPGHG). In terms of domain architecture, Laminin G-like spans 58-277 (GLQLSVAAPR…RVTLGPQPPC (220 aa)). EAR repeat units lie at residues 313-358 (DYVE…KWTE), 360-408 (KFVS…KWSH), 412-460 (KFTP…KWNP), 464-506 (LFEA…VHSH), 514-570 (SFQL…ELNV), 574-622 (AFVK…RWQG), and 625-668 (GFVA…RLRT). Residue Asn-320 is glycosylated (N-linked (GlcNAc...) asparagine). N-linked (GlcNAc...) asparagine glycosylation is found at Asn-468, Asn-497, Asn-556, and Asn-569.

It localises to the secreted. The protein resides in the cell surface. Its subcellular location is the cell projection. It is found in the stereocilium. In terms of biological role, plays a critical role in tooth and hair follicle morphogenesis through regulation of the Notch signaling pathway. May play a role in development or function of the auditory system. The polypeptide is Thrombospondin-type laminin G domain and EAR repeat-containing protein (TSPEAR) (Homo sapiens (Human)).